The primary structure comprises 93 residues: Putative sodium channel toxin Ts41 (93 aa).

A signal peptide spans 1–23 (MKIGVLFTIISMLCLLEVRKICS). 4 disulfides stabilise this stretch: C22/C87, C39/C62, C48/C67, and C52/C69. The 63-residue stretch at 26 to 88 (EGGYPRYFSF…FWNVYRKYCK (63 aa)) folds into the LCN-type CS-alpha/beta domain.

It belongs to the long (4 C-C) scorpion toxin superfamily. Expressed by the venom gland.

Its subcellular location is the secreted. The edited BmKBTx-like may modulate voltage-gated sodium channels (Nav). Its function is as follows. The non-edited form is able to form a heterodimer. In orthologs, a heterodimer with LVP beta-chain induces lipolysis in rat adipocytes, which is mediated through the beta-2 adrenergic receptor pathway (ADRB2). Since no LVP beta-chains have been identified in the venom of this scorpion, it is possible that this protein is not involved in a lipolysis process. In Tityus serrulatus (Brazilian scorpion), this protein is Putative sodium channel toxin Ts41.